The sequence spans 89 residues: MSLSFNTKAKIIADFGRNNYDSGSTAVQIALLTAQINHLQDHFAVHKKDHHSRRGLLRIVSQRRKLLVYFKNKDLASYTDLIERLNLRR.

The protein belongs to the universal ribosomal protein uS15 family. As to quaternary structure, part of the 30S ribosomal subunit. Forms a bridge to the 50S subunit in the 70S ribosome, contacting the 23S rRNA.

Its function is as follows. One of the primary rRNA binding proteins, it binds directly to 16S rRNA where it helps nucleate assembly of the platform of the 30S subunit by binding and bridging several RNA helices of the 16S rRNA. Forms an intersubunit bridge (bridge B4) with the 23S rRNA of the 50S subunit in the ribosome. This is Small ribosomal subunit protein uS15 from Baumannia cicadellinicola subsp. Homalodisca coagulata.